A 277-amino-acid polypeptide reads, in one-letter code: Ribonuclease HII (277 aa).

In terms of domain architecture, RNase H type-2 spans 72 to 260 (EYIAGIDEAG…IKEMIEMKKE (189 aa)). Positions 78, 79, and 170 each coordinate a divalent metal cation.

Belongs to the RNase HII family. The cofactor is Mn(2+). Mg(2+) serves as cofactor.

It localises to the cytoplasm. The catalysed reaction is Endonucleolytic cleavage to 5'-phosphomonoester.. Its function is as follows. Endonuclease that specifically degrades the RNA of RNA-DNA hybrids. This Geobacillus sp. (strain WCH70) protein is Ribonuclease HII.